The primary structure comprises 477 residues: MIRRLQDSGDLVRAFPRVHFVGIGGTGMSGIAEVMLTLGYEVSGSDNADNAATRRLAKLGARVMRGHSAANVLGTDCVVVSSAIREDNPELMEARSQRIPIMPRAAMLAELMRFRRGIAVAGTHGKTTTTSLAAAVLSEGGLDPTFVIGGQLLAAGANAKLGGGQWLVAEADESDGSFLRLNPLMAVITNIDADHLENYGNDFARVQAAFAEFLQRLPFYGLALLCIDDPEVAALAGKTPRHVMSYGMSENADVRAEDVVQDGPCMRFTLRLPEGTTTPVTLALPGRHNVLNALAAAAIGWQLGVAPDTIARALENFAGIGRRFNDLGEVTTSTGARVRVVDDYGHHPRELEAVFAAARGGWPDKRLVVAFQPHRYSRTRDQFDAFAAVLSTVDALVLSEVYPAGEAPIPGADSRALARAIRARGRSEPVVVGQIAGLAEVLPDVLQDGDLLLMMGAGDIGYVAQHIINNGFVGEPA.

122 to 128 contacts ATP; that stretch reads GTHGKTT.

Belongs to the MurCDEF family.

The protein localises to the cytoplasm. It carries out the reaction UDP-N-acetyl-alpha-D-muramate + L-alanine + ATP = UDP-N-acetyl-alpha-D-muramoyl-L-alanine + ADP + phosphate + H(+). It functions in the pathway cell wall biogenesis; peptidoglycan biosynthesis. Cell wall formation. This chain is UDP-N-acetylmuramate--L-alanine ligase, found in Xanthomonas axonopodis pv. citri (strain 306).